A 317-amino-acid polypeptide reads, in one-letter code: uncharacterized protein (317 aa).

The HTH lysR-type domain maps to 1–60 (MKHELSSMKAFVILAESSSFNNAAKLLNITQPALTRRIKKMEEDLHVQLFERTTRKVTLT). The H-T-H motif DNA-binding region spans 20–40 (FNNAAKLLNITQPALTRRIKK).

Belongs to the LysR transcriptional regulatory family.

This is an uncharacterized protein from Escherichia coli (strain K12).